Here is a 358-residue protein sequence, read N- to C-terminus: Arginase (358 aa).

Positions 146, 174, 176, and 178 each coordinate Mn(2+). Residues 176–180 (HADIN), 187–189 (SGN), and Asp-233 contribute to the substrate site. 2 residues coordinate Mn(2+): Asp-280 and Asp-282. Residues Thr-294 and Glu-325 each coordinate substrate.

The protein belongs to the arginase family. Homohexamer. Mn(2+) is required as a cofactor.

It localises to the cytoplasm. It catalyses the reaction L-arginine + H2O = urea + L-ornithine. The protein operates within nitrogen metabolism; urea cycle; L-ornithine and urea from L-arginine: step 1/1. The polypeptide is Arginase (aga-1) (Neurospora crassa (strain ATCC 24698 / 74-OR23-1A / CBS 708.71 / DSM 1257 / FGSC 987)).